A 97-amino-acid polypeptide reads, in one-letter code: MDKQSSAGGVKRSVPCDSNEANEMMPETPTGDSDPQPAPKKMKTSESSTILVVRYRRNFKRTSPEELLNDHARENRINPLQMEEEEFMEIMVEIPAK.

Residues 1 to 49 (MDKQSSAGGVKRSVPCDSNEANEMMPETPTGDSDPQPAPKKMKTSESST) form a disordered region. The Nuclear localization signal signature appears at 37-45 (PAPKKMKTS).

It belongs to the SPAN-X family. As to expression, detected in testis and sperm.

It localises to the cytoplasm. It is found in the nucleus. This is Sperm protein associated with the nucleus on the X chromosome A from Homo sapiens (Human).